The sequence spans 270 residues: tRNA pseudouridine synthase A (270 aa).

D60 functions as the Nucleophile in the catalytic mechanism. Residues 107 to 111 (FHARF) form an RNA binding region. Y118 lines the substrate pocket. Positions 168-172 (QCQSR) are interaction with tRNA.

The protein belongs to the tRNA pseudouridine synthase TruA family. In terms of assembly, homodimer.

It carries out the reaction uridine(38/39/40) in tRNA = pseudouridine(38/39/40) in tRNA. Its function is as follows. Formation of pseudouridine at positions 38, 39 and 40 in the anticodon stem and loop of transfer RNAs. The chain is tRNA pseudouridine synthase A from Escherichia coli O139:H28 (strain E24377A / ETEC).